A 50-amino-acid polypeptide reads, in one-letter code: Large ribosomal subunit protein bL32c (50 aa).

Belongs to the bacterial ribosomal protein bL32 family.

It is found in the plastid. The polypeptide is Large ribosomal subunit protein bL32c (rpl32) (Euglena longa (Euglenophycean alga)).